We begin with the raw amino-acid sequence, 1427 residues long: MRAFCTVSAPLEVCASSAEQLSPGSRFLALRLLGQQQPKTLYFLVDAKSRVREVYTQTCLHFATQGMLDTELFGLAVLIDGEYMFADPESKLSKYGPKSWRSSHTHGLDANGRPLLELHFRVQFYIESPFMLKDETSRHNYYLQLRHNILQRDLPREQAEQALVFLAGLALQADLGDAPPGTSNSKDDSGEETSASPSNGGRGLSATTTLPKISKRANERMLRLSTYVASTSKRETIPLPPSLPPNGADYYRIEDYLPSGLHTPWARSAMRACHREHLGMATAEAELLYIQQACSLHETINAHTYRMRLAKSEQGSGSAWFVVYAKGIKILGGESTNSSSNPETTTFLWPNITKLSFERKKFEIRSGESRITLYAASDEKNKLLLTLCKDTHQWSMKLAARLKEVSKREEEEAAESQRLHASYACSRSLLLPYKSKNEQRISVISSTSSNTTSGIVSDRVHSEDELEIMINTPPAPLAAPSTESLALAHLLDRPSVSRQTSSVGQMSLKDLEEQLAALSVRPQDASSNGATIVTNSSVQRNSMGTTANDSSTATDSPSSQHNIGSQCSSTCSTVVVTSPVNGAGASSSGAPIPVHSTSSSLELGFSHTAQNSALSETSPDDFLSTSAREETESVSGASGVYTLAHGAPPTETSGVYTMHSSELTGQSSEIAESEKSSHYGMFQPQKLEETHVQHSDSVDGKKKEDFRPRSDSNVSTGSSFRGDGSDPTDNKHSLLSAEELTNLIVGRGTYPSRKTVSSSLHSDCDYVTLPLGDQGEEEVDQPPAPPPPYSARHEKTGLCGPPIAKPIPKPIAVVAPKPDSPPCSPPVPPAPIPAPPPAIRRRDPPPYSISSKPRPTSLISVSSSAHPAPSAAGSMSSLKSEEVTARFITTRPQISILKAHTSLIPDGAKPSYAAPHHCSSVASSNGSVCSHQLSQQSLHNSNYAGGSQASLHHHHVPSHHRHSGSAAIGIVPYGLHKSTASLHHQQSCVLLPVIKPRQFLAPPPPSLPRQPPPPPPPNHPHLASHLYEREMARKQLELYQQQLYSDVDYVIYPIQDPAVSQQEYLDAKQGSLLAAMAQAAPPPPHHPYLAMQVSPAIYRSTPYLPLTLSTHSRYASTQNLSDTYVQLPGPGYSPLYSPSMASLCSSYEPPPPPPLHPAALAAAAAAGAGSSSSSMFARSRSDDNILNSLDLLPKGKRLPPPPPPPYVNRRLKKPPMPAPSEKPPPIPSKPIPSRMSPIPPRKPPTLNPHHANSPLTKTSSGAQWAGERPRPDLGLGLGLNRGNNSILAQLQASMVAQSHAQAQAQALDIALLREKSKHLDLPLISALCNDRSLLKQTKVVINPKTGQEMPTSSAQPSGATTNGVANSSAGAGTLSKARKGSTVSHRHPQDKLPPLPVQQLAEANNYVIDPAVMMKQQQQQQQHNKTS.

Residues 26–399 enclose the FERM domain; sequence RFLALRLLGQ…DTHQWSMKLA (374 aa). The interval 176-212 is disordered; that stretch reads GDAPPGTSNSKDDSGEETSASPSNGGRGLSATTTLPK. The segment covering 192 to 211 has biased composition (polar residues); sequence ETSASPSNGGRGLSATTTLP. Y227 and Y423 each carry phosphotyrosine. Disordered stretches follow at residues 520–566 and 611–656; these read VRPQ…IGSQ and NSAL…SGVY. The span at 524–544 shows a compositional bias: polar residues; sequence DASSNGATIVTNSSVQRNSMG. A compositionally biased stretch (low complexity) spans 545–559; sequence TTANDSSTATDSPSS. At Y679 the chain carries Phosphotyrosine. A compositionally biased stretch (basic and acidic residues) spans 688-710; the sequence is EETHVQHSDSVDGKKKEDFRPRS. Disordered regions lie at residues 688–732, 766–792, 815–880, 939–963, and 1000–1022; these read EETH…DNKH, YVTL…YSAR, APKP…SLKS, HNSN…HRHS, and LAPP…HPHL. Y766 bears the Phosphotyrosine mark. Residues 818–838 are compositionally biased toward pro residues; that stretch reads PDSPPCSPPVPPAPIPAPPPA. An RXPPXY motif motif is present at residues 842–847; the sequence is RDPPPY. Residues 848–859 show a composition bias toward polar residues; it reads SISSKPRPTSLI. Residues 860 to 877 show a composition bias toward low complexity; sequence SVSSSAHPAPSAAGSMSS. Positions 951–963 are enriched in basic residues; that stretch reads LHHHHVPSHHRHS. The span at 1001-1019 shows a compositional bias: pro residues; the sequence is APPPPSLPRQPPPPPPPNH. The short motif at 1008–1020 is the SH3-binding element; that stretch reads PRQPPPPPPPNHP. Y1103 bears the Phosphotyrosine mark. Positions 1149–1157 match the SH3-binding motif; sequence PPPPPPLHP. A Phosphoserine modification is found at S1181. Disordered stretches follow at residues 1190–1267 and 1345–1398; these read DLLP…WAGE and TGQE…LPVQ. 2 stretches are compositionally biased toward pro residues: residues 1214 to 1230 and 1237 to 1246; these read PPMP…PSKP and PIPPRKPPTL. Composition is skewed to polar residues over residues 1253 to 1262 and 1345 to 1370; these read SPLTKTSSGA and TGQE…SSAG. Positions 1376–1388 are enriched in basic residues; the sequence is KARKGSTVSHRHP.

In terms of assembly, forms a complex with Kibra and Mer. Interacts (via RXPPXY motif) with Kibra (via domain WW 1). Interacts with Mer and Hpo (via SARAH domain). Interacts with Schip1; the interaction results in recruitment of Schip1 to the apical cell membrane. Interacts with ack and yki. In terms of processing, phosphorylated by Ack at several tyrosines including Tyr-227, Tyr-423, Tyr-679, Tyr-766 and Tyr-1103.

It localises to the apical cell membrane. Activates the Hippo/SWH (Sav/Wts/Hpo) signaling pathway, a signaling pathway that plays a pivotal role in organ size control and tumor suppression by restricting proliferation and promoting apoptosis. The core of this pathway is composed of a kinase cascade wherein Hippo (Hpo), in complex with its regulatory protein Salvador (Sav), phosphorylates and activates Warts (Wts) in complex with its regulatory protein Mats, which in turn phosphorylates and inactivates the Yorkie (Yki) oncoprotein. Ex acts synergistically along with Mer and Kibra to regulate the Hippo signaling pathway. Involved in the control of cell proliferation in imaginal disks. May bind to certain proteins of signal transduction pathways by interaction with their SH3 domains. Required for apical localization of Schip1. The polypeptide is Protein expanded (ex) (Drosophila melanogaster (Fruit fly)).